Here is a 900-residue protein sequence, read N- to C-terminus: Methionine--tRNA ligase, cytoplasmic (900 aa).

One can recognise a GST C-terminal domain in the interval 74–198; sequence GWEQDDLTNQ…VLKQQGVLAL (125 aa). Residues 273–283 carry the 'HIGH' region motif; the sequence is PYVNNVPHLGN. Residues 593-597 carry the 'KMSKS' region motif; that stretch reads KFSKS. An ATP-binding site is contributed by lysine 596. Serine 825 is modified (phosphoserine). Phosphothreonine is present on threonine 835. The 57-residue stretch at 841-897 folds into the WHEP-TRS domain; the sequence is QIQALMDEVTKQGNIVRELKAQKADKNEVAAEVAKLLDLKKQLAVAEGKPPEAPKGK.

Belongs to the class-I aminoacyl-tRNA synthetase family. As to quaternary structure, monomer. Part of a multisubunit complex that groups tRNA ligases for Arg (RARS1), Asp (DARS1), Gln (QARS1), Ile (IARS1), Leu (LARS1), Lys (KARS1), Met (MARS1) the bifunctional ligase for Glu and Pro (EPRS1) and the auxiliary subunits AIMP1/p43, AIMP2/p38 and EEF1E1/p18. Forms a linear complex that contains MARS1, EEF1E1, EPRS1 and AIMP2 that is at the core of the multisubunit complex.

It is found in the cytoplasm. Its subcellular location is the cytosol. The protein localises to the nucleus. It localises to the nucleolus. It catalyses the reaction tRNA(Met) + L-methionine + ATP = L-methionyl-tRNA(Met) + AMP + diphosphate. Its activity is regulated as follows. Enzyme activity is increased by spermidine, EEF1A1, and when the Mg(2+) concentration is increased from 5 mM to 13 mM (in vitro), possibly by promoting the dissociation of the complex between the enzyme and its product. In terms of biological role, catalyzes the specific attachment of an amino acid to its cognate tRNA in a 2 step reaction: the amino acid (AA) is first activated by ATP to form AA-AMP and then transferred to the acceptor end of the tRNA. Plays a role in the synthesis of ribosomal RNA in the nucleolus. This Homo sapiens (Human) protein is Methionine--tRNA ligase, cytoplasmic.